The chain runs to 265 residues: Protein B8 (265 aa).

The chain is Protein B8 (B8) from Homo sapiens (Human).